A 470-amino-acid polypeptide reads, in one-letter code: Metalloreductase STEAP4 (470 aa).

Residues Thr-27–Phe-30, Ser-49–Arg-50, Tyr-67, Met-81–His-85, Asn-106, and Ala-139 contribute to the NADP(+) site. The FAD site is built by Trp-140 and Asp-148. NADP(+) is bound at residue Arg-171. 2 helical membrane-spanning segments follow: residues Phe-202–Ile-224 and Tyr-236–Ala-256. A Fe(3+)-binding site is contributed by Tyr-217. A Ferric oxidoreductase domain is found at Phe-247–Thr-395. FAD is bound by residues Gln-269 and Arg-290. A run of 2 helical transmembrane segments spans residues Leu-293 to Ile-313 and Ala-342 to Leu-362. Heme b is bound at residue His-304. Tyr-307 contributes to the Fe(3+) binding site. Positions 366 and 383 each coordinate FAD. 2 helical membrane-spanning segments follow: residues Phe-381–Tyr-401 and Ala-419–Met-439. His-397 contributes to the heme b binding site.

It belongs to the STEAP family. Homotrimer. Interacts with PTK2/FAK1; the interaction may regulate PTK2 phosphorylation. FAD serves as cofactor. It depends on heme b as a cofactor. In terms of tissue distribution, expressed in white and brown adipose tissues cells, as well as in muscle and liver cells. Detected in joints and spleens of arthritic mice.

It localises to the cell membrane. The protein resides in the golgi apparatus membrane. Its subcellular location is the early endosome membrane. The catalysed reaction is 2 Fe(2+) + NADP(+) + H(+) = 2 Fe(3+) + NADPH. The enzyme catalyses 2 Cu(+) + NADP(+) + H(+) = 2 Cu(2+) + NADPH. In terms of biological role, integral membrane protein that functions as a NADPH-dependent ferric-chelate reductase, using NADPH from one side of the membrane to reduce a Fe(3+) chelate that is bound on the other side of the membrane. Mediates sequential transmembrane electron transfer from NADPH to FAD and onto heme, and finally to the Fe(3+) chelate. Can also reduce Cu(2+) to Cu(1+). Plays a role in systemic metabolic homeostasis, integrating inflammatory and metabolic responses. Associated with obesity and insulin-resistance. Involved in inflammatory arthritis, through the regulation of inflammatory cytokines. Inhibits anchorage-independent cell proliferation. This chain is Metalloreductase STEAP4 (Steap4), found in Mus musculus (Mouse).